Reading from the N-terminus, the 456-residue chain is 5-hydroxytryptamine receptor 3E (456 aa).

A signal peptide spans 1 to 25 (MEGSWFHRKRFSFYLLLGFLLQGRG). The Extracellular portion of the chain corresponds to 26–248 (VTFTINCSGF…FYVAIRRRPS (223 aa)). A disulfide bridge links Cys162 with Cys176. The N-linked (GlcNAc...) asparagine glycan is linked to Asn175. Residues 249-269 (LYVINLLVPSGFLVAIDALSF) form a helical membrane-spanning segment. At 270 to 282 (YLPVKSGNRVPFK) the chain is on the cytoplasmic side. The chain crosses the membrane as a helical span at residues 283-303 (ITLLLGYNVFLLMMSDLLPTS). At 304–307 (GTPL) the chain is on the extracellular side. A helical transmembrane segment spans residues 308 to 328 (IGVYFALCLSLMVGSLLETIF). The Cytoplasmic portion of the chain corresponds to 329–433 (ITHLLHVATT…WLQFSHAMDA (105 aa)). Positions 401-432 (TGGSEWTRAQREHEAQKQHSVELWLQFSHAMD) are HA-stretch; determines single-channel conductance in 5-HT3 receptors. The helical transmembrane segment at 434–454 (MLFRLYLLFMASSIITVICLW) threads the bilayer. Residues 455–456 (NT) lie on the Extracellular side of the membrane.

The protein belongs to the ligand-gated ion channel (TC 1.A.9) family. 5-hydroxytryptamine receptor (TC 1.A.9.2) subfamily. HTR3E sub-subfamily. Forms homopentameric as well as heteropentameric serotonin-activated cation-selective channel complexes with HTR3A. The homomeric complex is not functional. Heteropentameric complexes display properties which resemble that of neuronal serotonin-activated channels in vivo. Expressed in adult colon and intestine.

The protein resides in the postsynaptic cell membrane. Its subcellular location is the cell membrane. The catalysed reaction is Na(+)(in) = Na(+)(out). The enzyme catalyses K(+)(in) = K(+)(out). It catalyses the reaction Ca(2+)(in) = Ca(2+)(out). Forms serotonin (5-hydroxytryptamine/5-HT3)-activated cation-selective channel complexes, which when activated cause fast, depolarizing responses in neurons. In Homo sapiens (Human), this protein is 5-hydroxytryptamine receptor 3E.